A 397-amino-acid polypeptide reads, in one-letter code: (S)-8-oxocitronellyl enol synthase ISY2 (397 aa).

Residues 36 to 38 (TGL), 64 to 65 (RR), 82 to 83 (DV), 106 to 107 (TW), Q144, Y180, I207, and 214 to 216 (SMM) contribute to the NADP(+) site. Y180 is a catalytic residue.

This sequence belongs to the short-chain dehydrogenases/reductases (SDR) family.

It carries out the reaction (S)-8-oxocitronellyl enol + NADP(+) = (6E)-8-oxogeranial + NADPH + H(+). It catalyses the reaction (S)-8-oxocitronellyl enol + NAD(+) = (6E)-8-oxogeranial + NADH + H(+). Functionally, iridoid synthase that catalyzes the first step in generation of the iridoid ring scaffold using the linear monoterpene (6E)-8-oxogeranial as substrate. Iridoids comprise a large family of distinctive bicyclic monoterpenes that possess a wide range of pharmacological activities, including anticancer, anti-inflammatory, antifungal and antibacterial activities. Catalyzes the conversion of the linear monoterpene (6E)-8-oxogeranial to (S)-8-oxocitronellyl enol, a precursor of nepetalactones, which are metabolites that are both insect-repellent and have euphoric effect in cats. This chain is (S)-8-oxocitronellyl enol synthase ISY2, found in Nepeta cataria (Catnip).